We begin with the raw amino-acid sequence, 107 residues long: Integration host factor subunit alpha (107 aa).

Belongs to the bacterial histone-like protein family. Heterodimer of an alpha and a beta chain.

Functionally, this protein is one of the two subunits of integration host factor, a specific DNA-binding protein that functions in genetic recombination as well as in transcriptional and translational control. The chain is Integration host factor subunit alpha from Mesorhizobium japonicum (strain LMG 29417 / CECT 9101 / MAFF 303099) (Mesorhizobium loti (strain MAFF 303099)).